The primary structure comprises 548 residues: BTB/POZ domain-containing protein At5g17580 (548 aa).

In terms of domain architecture, BTB spans 7-74 (SDLHINVKGV…CNGSEFKFTS (68 aa)). The NPH3 domain maps to 180–442 (DWKSEDLITI…VNVLCVSQLQ (263 aa)). Phosphotyrosine is present on Tyr-383. Positions 442 to 493 (QIRDTVAKEIKGMEEKVDEEEEEEIEVSSDEDEMEKMSNKLLGLEIENDECV) form a coiled coil.

It belongs to the NPH3 family.

The protein operates within protein modification; protein ubiquitination. In terms of biological role, may act as a substrate-specific adapter of an E3 ubiquitin-protein ligase complex (CUL3-RBX1-BTB) which mediates the ubiquitination and subsequent proteasomal degradation of target proteins. This Arabidopsis thaliana (Mouse-ear cress) protein is BTB/POZ domain-containing protein At5g17580.